Consider the following 743-residue polypeptide: Serine-rich coiled-coil domain-containing protein 1 (743 aa).

Disordered regions lie at residues 1 to 125 (MGDS…SRNK) and 156 to 175 (KSEG…SVKQ). The segment covering 29–56 (LPSSPSSSNTVGVHSSSPSSTNSSSGST) has biased composition (low complexity). The span at 81 to 102 (EPTNQNLSISNGAQPGQSSMQK) shows a compositional bias: polar residues. A coiled-coil region spans residues 672-713 (MKDECSMLKLQLKEKDELISQLQEELEKVQHLQKAFASRVDK).

It belongs to the CCSER family.

The protein is Serine-rich coiled-coil domain-containing protein 1 (CCSER1) of Bos taurus (Bovine).